Reading from the N-terminus, the 632-residue chain is Lipoma-preferred partner homolog (632 aa).

Disordered regions lie at residues 1–118 (MSHP…RSSL) and 135–249 (SSPY…RSYN). Residues 26-40 (THSFGTPSISVSTQQ) show a composition bias toward polar residues. The segment covering 41–53 (PPKKFAPVVAPKP) has biased composition (low complexity). An N6-acetyllysine modification is found at K109. Phosphoserine is present on residues S117 and S152. Residues 144 to 160 (PGSSSSIASPPVSTPVT) are compositionally biased toward low complexity. 2 stretches are compositionally biased toward polar residues: residues 172–182 (PLTATKKSATK) and 206–239 (SYST…SSGQ). At Y241 the chain carries Phosphotyrosine. The residue at position 246 (R246) is an Omega-N-methylarginine. A Glycyl lysine isopeptide (Lys-Gly) (interchain with G-Cter in SUMO1) cross-link involves residue K324. LIM zinc-binding domains lie at 434–493 (GRCA…INTL), 494–554 (EQCS…KFAP), and 555–623 (RCSV…RIRV).

The protein belongs to the zyxin/ajuba family. In terms of assembly, interacts with PDZ domains of SCRIB, with VASP and with ACTN1/alpha-actinin.

It is found in the nucleus. The protein resides in the cytoplasm. It localises to the cell junction. In terms of biological role, may play a structural role at sites of cell adhesion in maintaining cell shape and motility. In addition to these structural functions, it may also be implicated in signaling events and activation of gene transcription. May be involved in signal transduction from cell adhesion sites to the nucleus allowing successful integration of signals arising from soluble factors and cell-cell adhesion. Also suggested to serve as a scaffold protein upon which distinct protein complexes are assembled in the cytoplasm and in the nucleus. The sequence is that of Lipoma-preferred partner homolog (Lpp) from Rattus norvegicus (Rat).